Consider the following 420-residue polypeptide: Trophoblast glycoprotein (420 aa).

Positions 1-34 (MPGGCSRGPAAGDGRLRLARLALVLLGWVSSSSS) are cleaved as a signal peptide. The Extracellular segment spans residues 35–355 (TSSASSSSSS…PILPPSLQTS (321 aa)). One can recognise an LRRNT domain in the interval 53–91 (SAQPPLPDQCPALCECSEAARTVKCVNRNLTEVPTDLPL). Cystine bridges form between Cys-62/Cys-68 and Cys-66/Cys-77. Asn-81 carries N-linked (GlcNAc...) asparagine glycosylation. LRR repeat units follow at residues 92-113 (YVRNLFLTGNQLAVLPAGAFAR), 116-139 (PLAELAALNLSGSRLDEVRGGAFE), 141-163 (LPSLRQLDLSHNPLAYLSPFAFS), 172-204 (PSPLVELILNHIVPPDDKRQNRSFEGMVAAALV), 209-232 (LQGLHLLELASNHFLYLPRDVLAQ), 233-255 (LPSLRYLDLSNNSLVSLTYVSFR), and 256-275 (NLTHLESLHLEDNALKVLHN). Asn-124 is a glycosylation site (N-linked (GlcNAc...) asparagine). N-linked (GlcNAc...) asparagine glycosylation occurs at Asn-275. The 64-residue stretch at 283–346 (GLPHVRVFLD…LNSADLDCDP (64 aa)) folds into the LRRCT domain. 2 disulfides stabilise this stretch: Cys-298–Cys-323 and Cys-300–Cys-344. A helical membrane pass occupies residues 356–376 (YVFLGIVLALIGAIFLLVLYL). The Cytoplasmic segment spans residues 377–420 (NRKGIKKWMHNIRDACRDHMEGYHYRYEINADPRLTNLSSNSDV). Residue Ser-418 is modified to Phosphoserine.

Highly glycosylated.

The protein localises to the cell membrane. Functionally, may function as an inhibitor of Wnt/beta-catenin signaling by indirectly interacting with LRP6 and blocking Wnt3a-dependent LRP6 internalization. The chain is Trophoblast glycoprotein (TPBG) from Macaca fascicularis (Crab-eating macaque).